The following is a 324-amino-acid chain: UDP-N-acetylenolpyruvoylglucosamine reductase (324 aa).

One can recognise an FAD-binding PCMH-type domain in the interval 38–217 (AGGLAELMFQ…IRAEMDAVRQ (180 aa)). Arginine 183 is a catalytic residue. Serine 232 serves as the catalytic Proton donor. Glutamate 302 is an active-site residue.

It belongs to the MurB family. Requires FAD as cofactor.

It is found in the cytoplasm. It catalyses the reaction UDP-N-acetyl-alpha-D-muramate + NADP(+) = UDP-N-acetyl-3-O-(1-carboxyvinyl)-alpha-D-glucosamine + NADPH + H(+). It functions in the pathway cell wall biogenesis; peptidoglycan biosynthesis. Cell wall formation. The sequence is that of UDP-N-acetylenolpyruvoylglucosamine reductase from Allorhizobium ampelinum (strain ATCC BAA-846 / DSM 112012 / S4) (Agrobacterium vitis (strain S4)).